The sequence spans 104 residues: MIPGEIIVAEGDITLNADRDAITLNVANLGDRPIQVGSHYHFAETNAALSFDRAATLGRRLDIAAGTAVRFEPGQTREVALVPFAGAREVFGFSGAVMGKLDKD.

It belongs to the urease beta subunit family. In terms of assembly, heterotrimer of UreA (gamma), UreB (beta) and UreC (alpha) subunits. Three heterotrimers associate to form the active enzyme.

It is found in the cytoplasm. The catalysed reaction is urea + 2 H2O + H(+) = hydrogencarbonate + 2 NH4(+). The protein operates within nitrogen metabolism; urea degradation; CO(2) and NH(3) from urea (urease route): step 1/1. The sequence is that of Urease subunit beta from Methylocella silvestris (strain DSM 15510 / CIP 108128 / LMG 27833 / NCIMB 13906 / BL2).